A 216-amino-acid chain; its full sequence is GTP cyclohydrolase 1 (216 aa).

The segment at Met1 to Glu33 is disordered. Low complexity predominate over residues Pro24 to Glu33. Zn(2+) contacts are provided by Cys102, His105, and Cys173.

This sequence belongs to the GTP cyclohydrolase I family. Toroid-shaped homodecamer, composed of two pentamers of five dimers.

The catalysed reaction is GTP + H2O = 7,8-dihydroneopterin 3'-triphosphate + formate + H(+). It participates in cofactor biosynthesis; 7,8-dihydroneopterin triphosphate biosynthesis; 7,8-dihydroneopterin triphosphate from GTP: step 1/1. The chain is GTP cyclohydrolase 1 (folE) from Deinococcus radiodurans (strain ATCC 13939 / DSM 20539 / JCM 16871 / CCUG 27074 / LMG 4051 / NBRC 15346 / NCIMB 9279 / VKM B-1422 / R1).